Here is a 179-residue protein sequence, read N- to C-terminus: Large ribosomal subunit protein uL6c (179 aa).

Belongs to the universal ribosomal protein uL6 family. In terms of assembly, part of the 50S ribosomal subunit.

The protein localises to the plastid. It localises to the cyanelle. Its function is as follows. Binds 23S rRNA. This Cyanophora paradoxa protein is Large ribosomal subunit protein uL6c (rpl6).